Here is a 180-residue protein sequence, read N- to C-terminus: Protein SPMIP9 (180 aa).

Microtubule inner protein component of sperm flagellar doublet microtubules. As to expression, testis-specific. Detected in the germ cell lineage at all stages.

It is found in the nucleus. Its subcellular location is the cytoplasm. It localises to the cytoskeleton. The protein localises to the flagellum axoneme. In terms of biological role, microtubule inner protein (MIP) part of the dynein-decorated doublet microtubules (DMTs) in flagella axoneme. This Homo sapiens (Human) protein is Protein SPMIP9.